Consider the following 434-residue polypeptide: F-box/LRR-repeat protein 21 (434 aa).

Residues 39-85 form the F-box domain; it reads LLDWGNLPHHVVLRIFQYLPLIDRARASSVCRRWNEVFHIPDLWRKF. 6 LRR repeats span residues 187–213, 214–239, 242–265, 322–347, 349–374, and 375–400; these read DTPV…KMSS, CPHV…ALNY, LSDK…RIDV, GRSV…VVCA, GIQV…GLSE, and CEVS…SIME.

In terms of assembly, part of the SCF (SKP1-CUL1-F-box) E3 ubiquitin-protein ligase complex SCF(FBXL21) composed of CUL1, SKP1, RBX1 and FBXL21. Interacts with CRY1 and CRY2.

It is found in the cytoplasm. The protein localises to the cytosol. It localises to the nucleus. It participates in protein modification; protein ubiquitination. Functionally, substrate-recognition component of the SCF(FBXL21) E3 ubiquitin ligase complex involved in circadian rhythm function. Plays a key role in the maintenance of both the speed and the robustness of the circadian clock oscillation. The SCF(FBXL21) complex mainly acts in the cytosol and mediates ubiquitination of CRY proteins (CRY1 and CRY2), leading to CRY proteins stabilization. The SCF(FBXL21) complex counteracts the activity of the SCF(FBXL3) complex and protects CRY proteins from degradation. Involved in the hypothalamic suprachiasmatic nucleus (SCN) clock regulating temporal organization of the daily activities. This Bos taurus (Bovine) protein is F-box/LRR-repeat protein 21 (FBXL21).